We begin with the raw amino-acid sequence, 324 residues long: Methyltransferase pytC (324 aa).

The segment at 1–28 (MTVRTAAEPPNRIEVDMDAPSLDTDSSC) is disordered.

Belongs to the methyltransferase superfamily. LaeA methyltransferase family.

It participates in secondary metabolite biosynthesis. Methyltransferase; part of the gene cluster that mediates the biosynthesis of pyranterreones, a family of antioxidative compounds. The first step of pyranonigrins biosynthesis is performed by the hybrid PKS-NRPS synthetase pytA that condenses 4 malonyl-CoA units ato the acetyl starter unit by the modular PKS of pytA. The acyl chain is then connected to an L-serine through the amide bond by the modular NRPS of pytA. A tetramic acid is formed and released from the PKS-NRPS pytA to give pyranterreone 5 with the help of the thioesterase pytI. Pyranterreone 5 could be methylated by pytC to afford pyranterreone 6. Both pyranterreones 5 and 6 are subsequently oxidized by the FAD-linked oxidoreductase pytB and the cytochrome P450 monooxygenase pytD to form the fused gamma-pyrone core, resulting in pyranterreones 7 and 11, respectively. The hydroxy group at C-8 of pyranterreones 7 and 11 are dehydrated by the aspartyl protease pytH to form a delta-7 double bond to give pyranterreones 3 and 1, 2 accordingly. The exo-methylene of pyranterreone 3 could be reduced into a pendant methyl by reductase pytE to provide pyranterreone 4, also known as cordylactam. Pyranterreone 4 can be reconverted to pyranterreone 3 through pytB-catalyzed dehydrogenation or further oxidized to pyranterreones 9 and 10. The chain is Methyltransferase pytC from Aspergillus terreus.